We begin with the raw amino-acid sequence, 260 residues long: MPNLLEKTRKITSILQRSVDSLETELPYNTMASRLADIIDCNACIINGGGSLLGYAMKYKTNTDRVEEFFETRQFPDAYVKAASRVYDTEANLSVENELTIFPVESKDIYPDGLTTIAPIYGGGMRLGTLIIWRNDNEFSDDDLVLVEISSTVVGIQLLNLQTENLEETIRKQTAVNMAINTLSYSEMKAVAAILSELDGNEGRLTASVIADRIGITRSVIVNALRKLESAGIIESRSLGMKGTYLKVINEGIFDKLKEF.

Positions 1 to 159 (MPNLLEKTRK…SSTVVGIQLL (159 aa)) are GAF domain. The H-T-H motif DNA-binding region spans 207-226 (ASVIADRIGITRSVIVNALR).

It belongs to the CodY family.

It localises to the cytoplasm. In terms of biological role, DNA-binding global transcriptional regulator which is involved in the adaptive response to starvation and acts by directly or indirectly controlling the expression of numerous genes in response to nutrient availability. During rapid exponential growth, CodY is highly active and represses genes whose products allow adaptation to nutrient depletion. The polypeptide is Global transcriptional regulator CodY (Streptococcus equi subsp. zooepidemicus (strain H70)).